Reading from the N-terminus, the 344-residue chain is Holliday junction branch migration complex subunit RuvB (344 aa).

The segment at Met-1–Tyr-183 is large ATPase domain (RuvB-L). ATP is bound by residues Ile-22, Arg-23, Gly-64, Lys-67, Thr-68, Thr-69, Glu-130–Tyr-132, Arg-173, Tyr-183, and Arg-220. Mg(2+) is bound at residue Thr-68. The tract at residues Thr-184–Glu-254 is small ATPAse domain (RuvB-S). Residues Glu-257–Ala-344 form a head domain (RuvB-H) region. DNA-binding residues include Lys-312 and Arg-317.

It belongs to the RuvB family. Homohexamer. Forms an RuvA(8)-RuvB(12)-Holliday junction (HJ) complex. HJ DNA is sandwiched between 2 RuvA tetramers; dsDNA enters through RuvA and exits via RuvB. An RuvB hexamer assembles on each DNA strand where it exits the tetramer. Each RuvB hexamer is contacted by two RuvA subunits (via domain III) on 2 adjacent RuvB subunits; this complex drives branch migration. In the full resolvosome a probable DNA-RuvA(4)-RuvB(12)-RuvC(2) complex forms which resolves the HJ.

Its subcellular location is the cytoplasm. The catalysed reaction is ATP + H2O = ADP + phosphate + H(+). The RuvA-RuvB-RuvC complex processes Holliday junction (HJ) DNA during genetic recombination and DNA repair, while the RuvA-RuvB complex plays an important role in the rescue of blocked DNA replication forks via replication fork reversal (RFR). RuvA specifically binds to HJ cruciform DNA, conferring on it an open structure. The RuvB hexamer acts as an ATP-dependent pump, pulling dsDNA into and through the RuvAB complex. RuvB forms 2 homohexamers on either side of HJ DNA bound by 1 or 2 RuvA tetramers; 4 subunits per hexamer contact DNA at a time. Coordinated motions by a converter formed by DNA-disengaged RuvB subunits stimulates ATP hydrolysis and nucleotide exchange. Immobilization of the converter enables RuvB to convert the ATP-contained energy into a lever motion, pulling 2 nucleotides of DNA out of the RuvA tetramer per ATP hydrolyzed, thus driving DNA branch migration. The RuvB motors rotate together with the DNA substrate, which together with the progressing nucleotide cycle form the mechanistic basis for DNA recombination by continuous HJ branch migration. Branch migration allows RuvC to scan DNA until it finds its consensus sequence, where it cleaves and resolves cruciform DNA. The polypeptide is Holliday junction branch migration complex subunit RuvB (Syntrophomonas wolfei subsp. wolfei (strain DSM 2245B / Goettingen)).